The primary structure comprises 428 residues: Diaminopimelate decarboxylase (428 aa).

K64 is modified (N6-(pyridoxal phosphate)lysine). Pyridoxal 5'-phosphate is bound by residues G239 and 281-284; that span reads EPGR. R284, R319, and Y323 together coordinate substrate. C350 (proton donor) is an active-site residue. E351 and Y379 together coordinate substrate. Y379 lines the pyridoxal 5'-phosphate pocket.

Belongs to the Orn/Lys/Arg decarboxylase class-II family. LysA subfamily. Homodimer. Pyridoxal 5'-phosphate is required as a cofactor.

The catalysed reaction is meso-2,6-diaminopimelate + H(+) = L-lysine + CO2. Its pathway is amino-acid biosynthesis; L-lysine biosynthesis via DAP pathway; L-lysine from DL-2,6-diaminopimelate: step 1/1. Its function is as follows. Specifically catalyzes the decarboxylation of meso-diaminopimelate (meso-DAP) to L-lysine. In Methanothermobacter thermautotrophicus (strain ATCC 29096 / DSM 1053 / JCM 10044 / NBRC 100330 / Delta H) (Methanobacterium thermoautotrophicum), this protein is Diaminopimelate decarboxylase.